The primary structure comprises 772 residues: Alpha-xylosidase (772 aa).

Residue D416 is the Nucleophile of the active site. E419 is a catalytic residue. D482 (proton donor) is an active-site residue.

It belongs to the glycosyl hydrolase 31 family. As to quaternary structure, homohexamer.

The enzyme catalyses Hydrolysis of terminal, non-reducing alpha-D-xylose residues with release of alpha-D-xylose.. Its function is as follows. Can catalyze the transfer of alpha-xylosyl residue from alpha-xyloside to xylose, glucose, mannose, fructose, maltose, isomaltose, nigerose, kojibiose, sucrose and trehalose. This is Alpha-xylosidase (yicI) from Escherichia coli (strain K12).